We begin with the raw amino-acid sequence, 78 residues long: Small ribosomal subunit protein eS17 (78 aa).

This sequence belongs to the eukaryotic ribosomal protein eS17 family.

The sequence is that of Small ribosomal subunit protein eS17 from Sulfurisphaera tokodaii (strain DSM 16993 / JCM 10545 / NBRC 100140 / 7) (Sulfolobus tokodaii).